We begin with the raw amino-acid sequence, 367 residues long: Nodulation protein 10 (367 aa).

11 consecutive transmembrane segments (helical) span residues 15–37, 46–66, 88–108, 109–129, 155–175, 183–203, 208–228, 245–265, 270–290, 312–332, and 335–355; these read FDLL…WLHL, VFDL…SGFL, IFPA…VTGG, LNVT…LTAA, VLWT…LLEI, GALV…HFNI, NPFL…GVLA, WWLA…AAFI, AAPV…SAAH, MLVM…LWIV, and VGTV…AMKL.

This sequence belongs to the acyltransferase 3 family.

It localises to the cell membrane. Its function is as follows. Not known. NodX allows Rhizobium leguminosarum biovar viciae strain TOM to nodulate Afghanistan peas. This chain is Nodulation protein 10 (nodX), found in Rhizobium leguminosarum bv. viciae.